Consider the following 126-residue polypeptide: Large ribosomal subunit protein bL20c (126 aa).

This sequence belongs to the bacterial ribosomal protein bL20 family.

It is found in the plastid. It localises to the chloroplast. In terms of biological role, binds directly to 23S ribosomal RNA and is necessary for the in vitro assembly process of the 50S ribosomal subunit. It is not involved in the protein synthesizing functions of that subunit. The polypeptide is Large ribosomal subunit protein bL20c (Lactuca sativa (Garden lettuce)).